The sequence spans 458 residues: Argininosuccinate lyase (458 aa).

Belongs to the lyase 1 family. Argininosuccinate lyase subfamily.

Its subcellular location is the cytoplasm. The enzyme catalyses 2-(N(omega)-L-arginino)succinate = fumarate + L-arginine. Its pathway is amino-acid biosynthesis; L-arginine biosynthesis; L-arginine from L-ornithine and carbamoyl phosphate: step 3/3. In Geobacter sp. (strain M21), this protein is Argininosuccinate lyase.